Reading from the N-terminus, the 191-residue chain is Probable GTP-binding protein EngB (191 aa).

Residues 13–189 (DRLEVAFAGR…RAEIVALLPD (177 aa)) enclose the EngB-type G domain. Residues 21–28 (GRSNVGKS), 48–52 (GRTRE), 67–70 (DLPG), 134–137 (TKTD), and 168–170 (TSS) contribute to the GTP site. The Mg(2+) site is built by Ser-28 and Thr-50.

The protein belongs to the TRAFAC class TrmE-Era-EngA-EngB-Septin-like GTPase superfamily. EngB GTPase family. The cofactor is Mg(2+).

Its function is as follows. Necessary for normal cell division and for the maintenance of normal septation. This Maricaulis maris (strain MCS10) (Caulobacter maris) protein is Probable GTP-binding protein EngB.